Here is a 295-residue protein sequence, read N- to C-terminus: Hepatic leukemia factor (295 aa).

Basic and acidic residues predominate over residues 34–52 (LHPEDAFSKDRDKGKKLDD). Disordered regions lie at residues 34 to 69 (LHPEDAFSKDRDKGKKLDDGSNSPTVPQSAFLGPTL) and 93 to 160 (SENG…NRNT). The 64-residue stretch at 225-288 (DDKYWARRRK…GKCKNILAKY (64 aa)) folds into the bZIP domain. The interval 227-247 (KYWARRRKNNMAAKRSRDARR) is basic motif. A leucine-zipper region spans residues 248–255 (LKENQIAI).

This sequence belongs to the bZIP family. PAR subfamily. Binds DNA specifically as homodimer or heterodimer with other PAR factors. Isoform HLF43 is abundant in brain, liver and kidney. Isoform HLF36 is expressed only in the liver. Both isoforms accumulate in the liver with different circadian amplitudes. Isoform HLF36 reaches peak expression levels between 8 and 12 p.m. Isoform HLF43 displays a more pronounced fluctuation through the day.

It localises to the nucleus. The sequence is that of Hepatic leukemia factor (Hlf) from Rattus norvegicus (Rat).